The sequence spans 380 residues: MNKFTQHLQQLAEIGQKRQLPDIEHQGKFVIARDLTMLNLSSNDYLGLANDAQQVERFLQSIGKNQPLTSSSSRLLTGNFPIYQDFETLLAQRFQRESALLFNSGYHANIGILPAVADKQTLILADKLAHASLIDGIRLSGADFFRYKHNDYLHLEQLLQTHSERYQQVIIVTESVFSMDGDIADLQQLVALKKRYTNVLLYVDEAHAIGVYGQQGLGMAEVFDCIQEIDFLVGTFGKALASMGAYLVCDSEIREYLINTMRPLIFSTALPPINVAWTYFLFEQLPQFTEKRHHLEKLSQILRTEVTKRSEFPLLSETCIVPYILGENQQAVEKADYLQKQGYYCLPIRPPTVPKGTARLRFSLTADLTEQDIMGLISCL.

Arg18 contacts substrate. Residue 105–106 (GY) coordinates pyridoxal 5'-phosphate. His130 lines the substrate pocket. Residues Ser178, 204–207 (DEAH), and 235–238 (TFGK) each bind pyridoxal 5'-phosphate. The residue at position 238 (Lys238) is an N6-(pyridoxal phosphate)lysine. Residue Thr352 participates in substrate binding.

Belongs to the class-II pyridoxal-phosphate-dependent aminotransferase family. BioF subfamily. As to quaternary structure, homodimer. Pyridoxal 5'-phosphate is required as a cofactor.

It carries out the reaction 6-carboxyhexanoyl-[ACP] + L-alanine + H(+) = (8S)-8-amino-7-oxononanoate + holo-[ACP] + CO2. Its pathway is cofactor biosynthesis; biotin biosynthesis. Catalyzes the decarboxylative condensation of pimeloyl-[acyl-carrier protein] and L-alanine to produce 8-amino-7-oxononanoate (AON), [acyl-carrier protein], and carbon dioxide. This Glaesserella parasuis serovar 5 (strain SH0165) (Haemophilus parasuis) protein is Putative 8-amino-7-oxononanoate synthase (bioF).